Consider the following 75-residue polypeptide: Small ribosomal subunit protein bS18 (75 aa).

Belongs to the bacterial ribosomal protein bS18 family. In terms of assembly, part of the 30S ribosomal subunit. Forms a tight heterodimer with protein bS6.

Its function is as follows. Binds as a heterodimer with protein bS6 to the central domain of the 16S rRNA, where it helps stabilize the platform of the 30S subunit. This is Small ribosomal subunit protein bS18 from Histophilus somni (strain 129Pt) (Haemophilus somnus).